The sequence spans 113 residues: Ribulose bisphosphate carboxylase small subunit (113 aa).

The protein belongs to the RuBisCO small chain family. As to quaternary structure, heterohexadecamer of 8 large and 8 small subunits. Forms a CsoS2-CsoS1-RuBisCO complex.

It is found in the carboxysome. RuBisCO catalyzes two reactions: the carboxylation of D-ribulose 1,5-bisphosphate, the primary event in carbon dioxide fixation, as well as the oxidative fragmentation of the pentose substrate in the photorespiration process. Both reactions occur simultaneously and in competition at the same active site. Although the small subunit is not catalytic it is essential for maximal activity. There are estimated to be 152 RuBisCO holoenzymes per carboxysome. This chain is Ribulose bisphosphate carboxylase small subunit, found in Prochlorococcus marinus subsp. pastoris (strain CCMP1986 / NIES-2087 / MED4).